Consider the following 143-residue polypeptide: SsrA-binding protein (143 aa).

The protein belongs to the SmpB family.

Its subcellular location is the cytoplasm. In terms of biological role, required for rescue of stalled ribosomes mediated by trans-translation. Binds to transfer-messenger RNA (tmRNA), required for stable association of tmRNA with ribosomes. tmRNA and SmpB together mimic tRNA shape, replacing the anticodon stem-loop with SmpB. tmRNA is encoded by the ssrA gene; the 2 termini fold to resemble tRNA(Ala) and it encodes a 'tag peptide', a short internal open reading frame. During trans-translation Ala-aminoacylated tmRNA acts like a tRNA, entering the A-site of stalled ribosomes, displacing the stalled mRNA. The ribosome then switches to translate the ORF on the tmRNA; the nascent peptide is terminated with the 'tag peptide' encoded by the tmRNA and targeted for degradation. The ribosome is freed to recommence translation, which seems to be the essential function of trans-translation. The protein is SsrA-binding protein of Deinococcus geothermalis (strain DSM 11300 / CIP 105573 / AG-3a).